The following is a 488-amino-acid chain: MLRINRISNLRTFGQRFFSTEQQDVVVIGGGPGGYVAGIKAGQLGMKVTVVEKRGKLGGTCLNVGCIPSKALLNASHLYEEATTKMSKYGVKCSGVELDLGAMMQYKDKSVSGLTSGIEGLFKKNKVKYDKGFGKITGPNTVEVTLNDGSVKTIETKNIVIATGSEVTSLPNVNIDEESIISSTGALALKSVPKKLIVIGGGVIGLELGSVWSRLGSETTVVEFTNRIAAGADGEVAKKFQKSLEKQHMKFHLETKVTSVVKKSDGKVTVTVEQVGAGGFTGTLEADAVLVSVGRRPNTSGLGLESVGIPTDKAGRVEVGDHFNTKVPSIFAIGDAIRGPMLAHKAEEEGIAIIEQIHNGGGHVNYGAIPSIIYTHPEVAWVGKTEEELQKEGIQYNIGRFPFVANSRAKTNDDVEGFVKFLAAKDSDRVLGAHIMGTNAGELIGECVLAMEYGASCEDIARTCHGHPTLSEAVKEAAMDAYDKPIHM.

The transit peptide at 1-25 directs the protein to the mitochondrion; it reads MLRINRISNLRTFGQRFFSTEQQDV. FAD is bound by residues 52–61, K70, G134, and 163–165; these read EKRGKLGGTC and TGS. Cysteines 61 and 66 form a disulfide. Residues 200 to 207, E223, V257, and G294 each bind NAD(+); that span reads GGGVIGLE. Residues D335 and 341–344 contribute to the FAD site; that span reads MLAH. H467 acts as the Proton acceptor in catalysis.

The protein belongs to the class-I pyridine nucleotide-disulfide oxidoreductase family. The cofactor is FAD.

Its subcellular location is the mitochondrion matrix. It carries out the reaction N(6)-[(R)-dihydrolipoyl]-L-lysyl-[protein] + NAD(+) = N(6)-[(R)-lipoyl]-L-lysyl-[protein] + NADH + H(+). The chain is Dihydrolipoyl dehydrogenase, mitochondrial (lpd) from Dictyostelium discoideum (Social amoeba).